Reading from the N-terminus, the 338-residue chain is Aspartate carbamoyltransferase catalytic subunit (338 aa).

Residues Arg-59 and Thr-60 each coordinate carbamoyl phosphate. Lys-87 is an L-aspartate binding site. Carbamoyl phosphate-binding residues include Arg-109, His-142, and Gln-145. Positions 182 and 253 each coordinate L-aspartate. Gly-294 and Pro-295 together coordinate carbamoyl phosphate.

This sequence belongs to the aspartate/ornithine carbamoyltransferase superfamily. ATCase family. In terms of assembly, heterododecamer (2C3:3R2) of six catalytic PyrB chains organized as two trimers (C3), and six regulatory PyrI chains organized as three dimers (R2).

The catalysed reaction is carbamoyl phosphate + L-aspartate = N-carbamoyl-L-aspartate + phosphate + H(+). Its pathway is pyrimidine metabolism; UMP biosynthesis via de novo pathway; (S)-dihydroorotate from bicarbonate: step 2/3. Functionally, catalyzes the condensation of carbamoyl phosphate and aspartate to form carbamoyl aspartate and inorganic phosphate, the committed step in the de novo pyrimidine nucleotide biosynthesis pathway. The polypeptide is Aspartate carbamoyltransferase catalytic subunit (Prochlorococcus marinus (strain MIT 9515)).